Consider the following 728-residue polypeptide: Polyribonucleotide nucleotidyltransferase (728 aa).

Residues aspartate 509 and aspartate 515 each coordinate Mg(2+). Residues threonine 576 to isoleucine 638 enclose the KH domain. Residues glycine 648 to lysine 715 enclose the S1 motif domain.

This sequence belongs to the polyribonucleotide nucleotidyltransferase family. Mg(2+) serves as cofactor.

The protein resides in the cytoplasm. The catalysed reaction is RNA(n+1) + phosphate = RNA(n) + a ribonucleoside 5'-diphosphate. In terms of biological role, involved in mRNA degradation. Catalyzes the phosphorolysis of single-stranded polyribonucleotides processively in the 3'- to 5'-direction. This is Polyribonucleotide nucleotidyltransferase from Karelsulcia muelleri (strain GWSS) (Sulcia muelleri).